An 831-amino-acid polypeptide reads, in one-letter code: AMP deaminase (831 aa).

3 disordered regions span residues 26–45 (NPGA…QDTP), 66–110 (NGTQ…KLLN), and 130–149 (NAVV…METT). 2 positions are modified to phosphoserine: Ser79 and Ser84. Zn(2+) is bound by residues His319 and His321. Residues His321 and 390-395 (KFNLKY) each bind substrate. His587 is a binding site for Zn(2+). Glu590 is a substrate binding site. The active-site Proton acceptor is His609. Asp664 contributes to the Zn(2+) binding site. 665-668 (DPLQ) contacts substrate. Phosphoserine is present on residues Ser758, Ser776, Ser780, and Ser782.

The protein belongs to the metallo-dependent hydrolases superfamily. Adenosine and AMP deaminases family. As to quaternary structure, homotetramer. Zn(2+) is required as a cofactor.

The protein resides in the cytoplasm. The catalysed reaction is AMP + H2O + H(+) = IMP + NH4(+). It functions in the pathway purine metabolism; IMP biosynthesis via salvage pathway; IMP from AMP: step 1/1. In terms of biological role, AMP deaminase plays a critical role in energy metabolism. This chain is AMP deaminase (ada1), found in Schizosaccharomyces pombe (strain 972 / ATCC 24843) (Fission yeast).